Reading from the N-terminus, the 138-residue chain is Large ribosomal subunit protein uL16 (138 aa).

The protein belongs to the universal ribosomal protein uL16 family. Part of the 50S ribosomal subunit.

Binds 23S rRNA and is also seen to make contacts with the A and possibly P site tRNAs. The sequence is that of Large ribosomal subunit protein uL16 from Anaeromyxobacter dehalogenans (strain 2CP-C).